Consider the following 272-residue polypeptide: Undecaprenyl-diphosphatase (272 aa).

Helical transmembrane passes span 4-24 (IHSL…EFLP), 45-65 (AETF…VMFW), 89-109 (LTLG…LVFH), 115-135 (LFNP…LIAA), 152-174 (TYRQ…FSRS), 189-209 (YAAS…ATAL), 225-245 (MFAV…KTFL), and 251-271 (ISFI…YVVF).

This sequence belongs to the UppP family.

The protein localises to the cell inner membrane. It catalyses the reaction di-trans,octa-cis-undecaprenyl diphosphate + H2O = di-trans,octa-cis-undecaprenyl phosphate + phosphate + H(+). In terms of biological role, catalyzes the dephosphorylation of undecaprenyl diphosphate (UPP). Confers resistance to bacitracin. The protein is Undecaprenyl-diphosphatase of Citrobacter koseri (strain ATCC BAA-895 / CDC 4225-83 / SGSC4696).